A 171-amino-acid polypeptide reads, in one-letter code: MRYSKLTMLIPCALLLSACTTVTPAYKDNGTRSGPCVEGGPDNVAQQFYDYRILHRSNDITALRPYLSDKLATLLSDASRDNNHRELLTNDPFSSRTTLPDSAHVASASTIPNRDARNIPLRVDLKQGDQGWQDEVLMIQEGQCWVIDDVRYLGGSVHATAGTLRQSIENR.

Residues 1 to 18 (MRYSKLTMLIPCALLLSA) form the signal peptide. The N-palmitoyl cysteine moiety is linked to residue cysteine 19. Cysteine 19 carries the S-diacylglycerol cysteine lipid modification.

Its subcellular location is the cell membrane. This is an uncharacterized protein from Escherichia coli (strain K12).